The primary structure comprises 256 residues: Protein FixA (256 aa).

Belongs to the ETF beta-subunit/FixA family. In terms of assembly, heterodimer of FixA and FixB.

It functions in the pathway amine and polyamine metabolism; carnitine metabolism. Required for anaerobic carnitine reduction. May bring reductant to CaiA. This chain is Protein FixA, found in Escherichia coli O7:K1 (strain IAI39 / ExPEC).